Reading from the N-terminus, the 548-residue chain is Mannosyltransferase APTG1 (548 aa).

Residues 1-23 (MDIRKRKNAGGDGDGGADGASVN) are disordered. 3 helical membrane-spanning segments follow: residues 41–61 (IFLF…TYFN), 98–118 (LFAF…YIMI), and 146–166 (GNVA…FFCL). An N-linked (GlcNAc...) asparagine glycan is attached at Asn-167. The next 7 helical transmembrane spans lie at 169-189 (TFSN…WPCI), 204-224 (LVIA…WLYV), 238-258 (FIIL…CLLD), 260-280 (LMYG…FLSS), 294-314 (FTQG…AGII), 320-340 (KLSA…HKEF), and 342-362 (FVLP…AQME). An N-linked (GlcNAc...) asparagine glycan is attached at Asn-382. Residues 392–412 (LSVYFLLATNIPMALYMSLFH) form a helical membrane-spanning segment. Asn-490 carries N-linked (GlcNAc...) asparagine glycosylation.

It belongs to the glycosyltransferase 22 family. As to expression, mostly expressed, mainly in vascular tissues, in leaves, roots, stems, flowers, siliques and pollen, and, to a lower extent, in seedlings.

The protein localises to the endoplasmic reticulum membrane. Its function is as follows. Mannosyltransferase involved in glycosylphosphatidylinositol-anchor biosynthesis. Required for the pollen tube micropylar guidance and embryo development by regulating GPI-anchor mediated protein localization (e.g. COBL10 and A36). The sequence is that of Mannosyltransferase APTG1 from Arabidopsis thaliana (Mouse-ear cress).